The chain runs to 128 residues: uncharacterized protein (128 aa).

The VOC domain occupies S5–Q128. A divalent metal cation-binding residues include H8, E56, H77, and E124.

This is an uncharacterized protein from Bacillus subtilis (strain 168).